Here is a 385-residue protein sequence, read N- to C-terminus: cAMP-dependent protein kinase regulatory subunit (385 aa).

Over residues 1–22 (MSSTGFTSPFGNANPFGSSGRS) the composition is skewed to polar residues. Disordered regions lie at residues 1–51 (MSST…GVKN) and 77–111 (DFPAHYNLGRRTSVSAESLKPVTDNSDNWSPPVHP). The segment at 1–128 (MSSTGFTSPF…RLKKAISGNF (128 aa)) is dimerization and phosphorylation. S89 bears the Phosphoserine mark. 3',5'-cyclic AMP is bound by residues 129–260 (LFNH…EEVP), E207, R216, 261–378 (ILKT…EAEE), E328, and R337.

The protein belongs to the cAMP-dependent kinase regulatory chain family. Tetramer, composed of 2 regulatory (R) and 2 catalytic (C) subunits. In the presence of cAMP it dissociates into 2 active monomeric C subunits and an R dimer.

The protein is cAMP-dependent protein kinase regulatory subunit (mcb) of Neurospora crassa (strain ATCC 24698 / 74-OR23-1A / CBS 708.71 / DSM 1257 / FGSC 987).